An 886-amino-acid chain; its full sequence is MTLLTSSLLLFSLLTSRLEAIPVLEKSPAHPAHSAHPAHPAHPAHPAHPSPGVRILRAPESLVAPLGDEVVLECETSLQPERFEWSHRSSRSPGAGFKYLKTGTAKANVSQEAAISRLRVLVRPDTLGEYRCVGWFGPLVVTSTIARLELASTSLVDAQESESPLQWRVSAGNSVLWSCGQQVQSNPSASWSYYRNGVEIKPEFIGTNGNLFLSNVSSESSGSYSCQATNPASGERIQLPGSLQLQVTPEQRSESKSPHLLRGQPSSQEITIREGSSLLLLCPGVGSPPPTVVWSSPDVVGAVKNKRSKVFGHALEISNTRVNDAGTYICFQDNGVRPALEHYIKVHVEQPPQIVRPPWADLTNEGDRLKLECKATGVPTPEIYWLLNGHSSIDDSEAELSNNFLILHSVLKRHAGYVQCFARNRLGEHSAGTLLQVNPKQIQEPRESGGTHRPKPNQGSRQKQMYPPTPPNVTRLSDESVMLRWMVPRNDGLPIVIFKVQYRMVGKRKNWQTTNDNIPYGKPKWNSELGKSFTASVTDLKPQHTYRFRILAVYSNNDNKESNTSAKFYLQPGAALDPMPVPELLEIEEYSETAVVLHWSLASDADEHLITGYYAYYRPSSSAGEYFKATIEGAHARSFKIAPLETATMYEFKLQSFSAASASEFSALKQGRTQRPKTSTTEEPTLQMGDRDTTTPSHNETFNMSPMLTGTIGGGAVLILLLISTCFCVCRRRNSRSRGNNPNKPRMAELRDDFVPLGNCSPTKQRQRTRHIHITLNPLAQQQQQALEEKNDTDQDAPYYQRPSSYDYDPTLRRMSSSSLRRSQRTLERAGGSNGSNNGNNNNLNQSAEAGSIENPGKPGRVLMKRPRLSSRSENLSSGSLNSVGV.

An N-terminal signal peptide occupies residues 1-20; the sequence is MTLLTSSLLLFSLLTSRLEA. The Extracellular segment spans residues 21–709; it reads IPVLEKSPAH…ETFNMSPMLT (689 aa). The span at 29–38 shows a compositional bias: low complexity; the sequence is AHPAHSAHPA. The tract at residues 29–52 is disordered; sequence AHPAHSAHPAHPAHPAHPAHPSPG. 4 consecutive Ig-like C2-type domains span residues 51–148, 138–238, 258–346, and 352–438; these read PGVR…IARL, PLVV…ERIQ, PHLL…YIKV, and PQIV…LQVN. Cystine bridges form between C74–C132, C179–C226, C282–C330, and C373–C420. Residues N108 and N215 are each glycosylated (N-linked (GlcNAc...) asparagine). The interval 432–475 is disordered; the sequence is GTLLQVNPKQIQEPRESGGTHRPKPNQGSRQKQMYPPTPPNVTR. Fibronectin type-III domains are found at residues 467–573 and 581–676; these read PPTP…LQPG and VPEL…TQRP. N472 is a glycosylation site (N-linked (GlcNAc...) asparagine). The heparin site is built by R503, K507, K509, and R547. N563 carries an N-linked (GlcNAc...) asparagine glycan. The segment at 668–697 is disordered; that stretch reads LKQGRTQRPKTSTTEEPTLQMGDRDTTTPS. Positions 671 to 684 are enriched in polar residues; sequence GRTQRPKTSTTEEP. A glycan (N-linked (GlcNAc...) asparagine) is linked at N699. Residues 710–730 traverse the membrane as a helical segment; sequence GTIGGGAVLILLLISTCFCVC. Topologically, residues 731–886 are cytoplasmic; sequence RRRNSRSRGN…SSGSLNSVGV (156 aa). Disordered stretches follow at residues 734–768 and 781–886; these read NSRSRGNNPNKPRMAELRDDFVPLGNCSPTKQRQR and QQQQ…SVGV. 2 stretches are compositionally biased toward low complexity: residues 829–843 and 870–886; these read RAGGSNGSNNGNNNN and SSRSENLSSGSLNSVGV.

This sequence belongs to the immunoglobulin superfamily. IHOG family. Homodimer. Heterotetramer; 2 iHog chains bind 2 hh chains when facilitated by heparin, heparin is required to promote high-affinity interactions between hh and iHog.

It is found in the membrane. Its function is as follows. Mediates response to the active Hedgehog (Hh) protein signal in embryos, functioning upstream or at the level of patched (ptc). The sequence is that of Interference hedgehog (ihog) from Drosophila melanogaster (Fruit fly).